The primary structure comprises 295 residues: MELLRTVDAMQAQADAARAEGQTLALVPTLGALHEGHLALVRRALNEADHVTVSVFVNPTQFGPGEDYDDYPRDLEGDRETLEALDVDAMFAPSVEEMYPYADDEALPGPLAWVDVERLDEHLCGAYREGHFRGVTTVVTKLFHACKPDVAVFGRKDAQQYVILQRLVEDLLFDIEIVGVPTVREPDGLAQSSRNEYLDPEEREQATVLYAAVTAAEEAIEGGEQAAEGVVGAMENELAAAPDADVQYAEVVDAHTLQPVDHLVPGQEVLAAVAVFFGETRLIDNTFVQVPPAQA.

His37 serves as the catalytic Proton donor. Gln61 is a (R)-pantoate binding site. Gln61 contacts beta-alanine. 154-157 (GRKD) lines the ATP pocket. Gln160 contacts (R)-pantoate. Residues Val183 and 191–194 (QSSR) contribute to the ATP site.

It belongs to the pantothenate synthetase family. Homodimer.

The protein localises to the cytoplasm. It carries out the reaction (R)-pantoate + beta-alanine + ATP = (R)-pantothenate + AMP + diphosphate + H(+). The protein operates within cofactor biosynthesis; (R)-pantothenate biosynthesis; (R)-pantothenate from (R)-pantoate and beta-alanine: step 1/1. Catalyzes the condensation of pantoate with beta-alanine in an ATP-dependent reaction via a pantoyl-adenylate intermediate. The protein is Pantothenate synthetase of Salinibacter ruber (strain DSM 13855 / M31).